The sequence spans 418 residues: FAD-dependent monooxygenase fmqB (418 aa).

FAD contacts are provided by V12 and R68. Residue R147 is part of the active site. FAD is bound by residues D272 and G285.

It belongs to the paxM FAD-dependent monooxygenase family.

It localises to the cytoplasm. The protein operates within alkaloid biosynthesis. FAD-dependent monooxygenase; part of the gene cluster that mediates the biosynthesis of the antitumor fumiquinazolines that confer a dual-usage capability to defend against phagocytes in the environment and animal hosts. The simplest member is fumiquinazoline F (FQF) with a 6-6-6 tricyclic core derived from anthranilic acid (Ant), tryptophan (Trp), and alanine (Ala). The trimodular NRPS fmqA is responsible for FQF formation. Modules 1, 2 and 3 of fmqA are predicted to activate and load Ant, Trp and Ala, respectively, providing for the assembly of an Ant-Trp-Ala-S-enzyme intermediate that would undergo double cyclization for chain release and generation of the tricyclic 6-6-6 product fumiquinazoline F. The presence of an E domain predicted for module 2 of fmqA is consistent with epimerization of L-Trp to D-Trp during assembly to generate the R-stereocenter at C14 of FQF. The FAD-dependent monooxygenase fmqB and the monomodular NRPS fmqC then maturate FQF to FQA. FmqB oxidizes the 2',3'-double bond of the indole side chain of FQF, and fmqC activates L-Ala as the adenylate, installs it as the pantetheinyl thioester on its carrier protein domain, and acylates the oxidized indole for subsequent intramolecular cyclization to create the 6-5-5-imidazolindolone of FQA. The FAD-linked oxidoreductase fmqD introduces a third layer of scaffold complexity by converting FQA to the spirohemiaminal FQC, presumably by catalyzing the formation of a transient imine within the pyrazinone ring. FQC subsequently converts nonenzymatically to the known cyclic aminal FQD. The sequence is that of FAD-dependent monooxygenase fmqB from Aspergillus fumigatus (strain ATCC MYA-4609 / CBS 101355 / FGSC A1100 / Af293) (Neosartorya fumigata).